A 518-amino-acid chain; its full sequence is 4-trimethylaminobutyraldehyde dehydrogenase B (518 aa).

Residues K204 and 256-260 (GSVPT) contribute to the NAD(+) site. E278 acts as the Proton acceptor in catalysis. C312 functions as the Nucleophile in the catalytic mechanism. E415 is an NAD(+) binding site.

The protein belongs to the aldehyde dehydrogenase family. As to quaternary structure, homotetramer.

It is found in the cytoplasm. The protein localises to the cytosol. It catalyses the reaction 4-(trimethylamino)butanal + NAD(+) + H2O = 4-(trimethylamino)butanoate + NADH + 2 H(+). The enzyme catalyses an aldehyde + NAD(+) + H2O = a carboxylate + NADH + 2 H(+). It participates in amine and polyamine biosynthesis; carnitine biosynthesis. Converts gamma-trimethylaminobutyraldehyde into gamma-butyrobetaine with high efficiency (in vitro). Can catalyze the irreversible oxidation of a broad range of aldehydes to the corresponding acids in an NAD-dependent reaction, but with low efficiency. This chain is 4-trimethylaminobutyraldehyde dehydrogenase B (aldh9a1b), found in Danio rerio (Zebrafish).